The chain runs to 108 residues: Nucleoid-associated protein mma_2329 (108 aa).

This sequence belongs to the YbaB/EbfC family. In terms of assembly, homodimer.

The protein localises to the cytoplasm. It is found in the nucleoid. In terms of biological role, binds to DNA and alters its conformation. May be involved in regulation of gene expression, nucleoid organization and DNA protection. The polypeptide is Nucleoid-associated protein mma_2329 (Janthinobacterium sp. (strain Marseille) (Minibacterium massiliensis)).